Consider the following 227-residue polypeptide: Flagellar transcriptional regulator FtcR (227 aa).

Residues 1–116 form the Response regulatory domain; it reads MIVVVDDRDM…EILARINAIR (116 aa). The segment at residues 127-226 is a DNA-binding region (ompR/PhoB-type); the sequence is ADGTQLGPIR…KRFLGYCINI (100 aa).

In terms of biological role, required for transcription of flagellar genes. This Brucella abortus (strain 2308) protein is Flagellar transcriptional regulator FtcR (ftcR).